A 54-amino-acid polypeptide reads, in one-letter code: UPF0434 protein BCI_0256 (54 aa).

The protein belongs to the UPF0434 family.

The protein is UPF0434 protein BCI_0256 of Baumannia cicadellinicola subsp. Homalodisca coagulata.